Consider the following 70-residue polypeptide: Brevinin-1CG3 (70 aa).

The signal sequence occupies residues 1 to 22; it reads MFTLKKSLLLLFFLGTINLSLC. Positions 23–44 are cleaved as a propeptide — removed in mature form; that stretch reads EQERNAEEERRDDSDKRDVEVE. A disulfide bridge links cysteine 64 with cysteine 70.

This sequence belongs to the frog skin active peptide (FSAP) family. Brevinin subfamily. Expressed by the skin glands.

Its subcellular location is the secreted. In terms of biological role, antimicrobial peptide active against a variety of Gram-positive and some Gram-negative bacterial strains. Has antifungal activity against a slime mold isolate. Has hemolytic activity against human erythrocytes. This Amolops chunganensis (Chungan torrent frog) protein is Brevinin-1CG3.